The chain runs to 596 residues: MSLINIHNASLSFSNLQILEKSTFHINKNERVCLIGKNGAGKSTLLKIINKKQDLDEGQIIYKKNTTTAYLEQNNPKNLNISIYDFIALGLKEHEKNKKKHTNEIVKIEKIIELIKLNKNTLLSHLSGGLLRKVALGRVLVREPDILLLDEPTNHLDMKTIKWLETFLKKFSGSILFVSHDRNFIQNVSTRIIDLDRGKLVSWPGDYENFIKLKNESYRIEKIQKQLFDKNLEKEEQWIRKGIKARSTRNEGRVKKLKILQKEQKDYKKIEKINNIEINQSKNYLGKIIFKLDNIDFLVNNKIIIKNFSSIIQHGDKLALIGDNGCGKSTLIKIIIGENKPQKGKIYIGKGLKISYFDQNRSFLNPNKSIIENIDYGKEKILLNSREQHIIRYLKNFLFKPNQLKSLVKTLSGGECNRLLLAQLFLKPSNVLILDEPTNDLDLDTLQLLEKIIIAYKGTVIIVSHDKTFIKNTAKKCWFFEKNGFINTHFSQYDSLKKEKNNFHKEKIQKNKSKINLAIKIKNNFKKELNAILYEIETIELDIKTLQKKVNEPDFFKKTLEEKLPTLKMLAQKERKLGKKILFWEKLEKNIINTKI.

2 ABC transporter domains span residues 1-222 (MSLI…RIEK) and 290-516 (FKLD…SKIN). Residues 36–43 (GKNGAGKS) and 322–329 (GDNGCGKS) each bind ATP. Positions 519-596 (IKIKNNFKKE…LEKNIINTKI (78 aa)) are C-terminal domain (CTD), binds DNA.

It belongs to the ABC transporter superfamily. ABCF family. Uup subfamily.

It localises to the cytoplasm. The enzyme catalyses ATP + H2O = ADP + phosphate + H(+). Its function is as follows. Probably plays a role in ribosome assembly or function. May be involved in resolution of branched DNA intermediates that result from template switching in postreplication gaps. Binds DNA and has ATPase activity. The chain is ATP-binding protein Uup from Buchnera aphidicola subsp. Acyrthosiphon pisum (strain APS) (Acyrthosiphon pisum symbiotic bacterium).